The following is a 65-amino-acid chain: Photosystem II reaction center protein Z (65 aa).

2 helical membrane-spanning segments follow: residues 11-31 and 44-64; these read LVLA…VIFA and WLAC…DGIF.

This sequence belongs to the PsbZ family. PSII is composed of 1 copy each of membrane proteins PsbA, PsbB, PsbC, PsbD, PsbE, PsbF, PsbH, PsbI, PsbJ, PsbK, PsbL, PsbM, PsbT, PsbY, PsbZ, Psb30/Ycf12, at least 3 peripheral proteins of the oxygen-evolving complex and a large number of cofactors. It forms dimeric complexes.

The protein localises to the plastid. The protein resides in the chloroplast thylakoid membrane. In terms of biological role, may control the interaction of photosystem II (PSII) cores with the light-harvesting antenna, regulates electron flow through the 2 photosystem reaction centers. PSII is a light-driven water plastoquinone oxidoreductase, using light energy to abstract electrons from H(2)O, generating a proton gradient subsequently used for ATP formation. The polypeptide is Photosystem II reaction center protein Z (Euglena gracilis).